The chain runs to 487 residues: GTSTVALIAVIISSILYLLFGGSGHKNLPPGPKPWPIVGNLLQLGEKPHAQFAELAQTYGDIFTLKMGTETVVVASTSSAASEILKTHDRILSARYVFQSFRVKGHVENSIVWSDCTETWKNLRKVCRTELFTQKMIESQAHVREKKCEEMVEYLMKKQGEEVKIVEVIFGTLVNIFGNLIFSQNIFELGDPNSGSSEFKEYLWRMLELGNSTNPADYFPMLGKFDLFGQRKEVAECLKGIYAIWGAMLQERKLAKKVDGYKSKNDFVDVCLDSGLNDYQINALLMELFGAGTETSASTIEWAMTELTKNPKITAKIRSEIQTVVGERSVKESDFPNLPYLEATVKETLRLHPPTPLLLPRRALETCTILNYTIPKDCQIMVNAWGIGRDPKTWTDPLTFSPERFLNSSVDFRGNDFSLIPFGAGRRICPGLPIANQFIALLVATFVQNLDWCLPNGMSVDHLIVEEKFGLTLQKEPPLFIVPKSRV.

A helical transmembrane segment spans residues 4-24 (TVALIAVIISSILYLLFGGSG). Cys429 contacts heme.

Belongs to the cytochrome P450 family. Heme serves as cofactor.

It is found in the endoplasmic reticulum membrane. It localises to the microsome membrane. It carries out the reaction (S)-N-methylcoclaurine + reduced [NADPH--hemoprotein reductase] + O2 = (S)-3'-hydroxy-N-methylcoclaurine + oxidized [NADPH--hemoprotein reductase] + H2O + H(+). Its pathway is alkaloid biosynthesis; (S)-reticuline biosynthesis; (S)-reticuline from (S)-norcoclaurine: step 3/4. 3'-hydroxylation of (S)-N-methylcoclaurine. The polypeptide is (S)-N-methylcoclaurine 3'-hydroxylase isozyme 1 (CYP80B1) (Eschscholzia californica (California poppy)).